Consider the following 189-residue polypeptide: dCTP deaminase (189 aa).

DCTP contacts are provided by residues lysine 112–arginine 117, threonine 136–glutamate 138, glutamine 157, tyrosine 171, and glutamine 181. Residue glutamate 138 is the Proton donor/acceptor of the active site.

Belongs to the dCTP deaminase family. Homotrimer.

The enzyme catalyses dCTP + H2O + H(+) = dUTP + NH4(+). It participates in pyrimidine metabolism; dUMP biosynthesis; dUMP from dCTP (dUTP route): step 1/2. Its function is as follows. Catalyzes the deamination of dCTP to dUTP. The protein is dCTP deaminase of Burkholderia orbicola (strain MC0-3).